The sequence spans 234 residues: Leucyl/phenylalanyl-tRNA--protein transferase (234 aa).

Belongs to the L/F-transferase family.

The protein resides in the cytoplasm. The catalysed reaction is N-terminal L-lysyl-[protein] + L-leucyl-tRNA(Leu) = N-terminal L-leucyl-L-lysyl-[protein] + tRNA(Leu) + H(+). It carries out the reaction N-terminal L-arginyl-[protein] + L-leucyl-tRNA(Leu) = N-terminal L-leucyl-L-arginyl-[protein] + tRNA(Leu) + H(+). It catalyses the reaction L-phenylalanyl-tRNA(Phe) + an N-terminal L-alpha-aminoacyl-[protein] = an N-terminal L-phenylalanyl-L-alpha-aminoacyl-[protein] + tRNA(Phe). Its function is as follows. Functions in the N-end rule pathway of protein degradation where it conjugates Leu, Phe and, less efficiently, Met from aminoacyl-tRNAs to the N-termini of proteins containing an N-terminal arginine or lysine. This is Leucyl/phenylalanyl-tRNA--protein transferase from Pseudoalteromonas atlantica (strain T6c / ATCC BAA-1087).